The primary structure comprises 227 residues: uncharacterized protein (227 aa).

Transmembrane regions (helical) follow at residues 15–34, 55–77, 92–114, 121–140, 145–167, 180–202, and 206–224; these read FIAAEALYSSIIFLICFLIY, TFLFLGLAYFLRFVVLLLSASGV, AFSMAFLAYSGSAAILYTIYSLL, FPGEVVINGVALVIALTSLL, LVFLISQLALVFLLVAAIFVNYS, PLYILLFVFWLLNISLTFRFLPL, and FAIYTLSVAVILIIAYRVL.

The protein localises to the cell membrane. This is an uncharacterized protein from Archaeoglobus fulgidus (strain ATCC 49558 / DSM 4304 / JCM 9628 / NBRC 100126 / VC-16).